Consider the following 110-residue polypeptide: Putative zinc finger protein ORF110 (110 aa).

The segment at 3-26 adopts a C2H2-type zinc-finger fold; the sequence is YVCTACKLKFHTFEEFKIHVHLFH.

The protein is Putative zinc finger protein ORF110 of Acidianus filamentous virus 1 (isolate United States/Yellowstone) (AFV-1).